The following is a 313-amino-acid chain: Carbamate kinase 2 (313 aa).

The protein belongs to the carbamate kinase family.

The protein localises to the cytoplasm. The catalysed reaction is hydrogencarbonate + NH4(+) + ATP = carbamoyl phosphate + ADP + H2O + H(+). Its pathway is metabolic intermediate metabolism; carbamoyl phosphate degradation; CO(2) and NH(3) from carbamoyl phosphate: step 1/1. This is Carbamate kinase 2 (arcC2) from Staphylococcus aureus (strain USA300).